The sequence spans 195 residues: ADP-ribosylation factor L (195 aa).

Glycine 2 is lipidated: N-myristoyl glycine. GTP-binding positions include 25 to 32 (GLENSGKT), 72 to 76 (DLLYP), and 131 to 134 (NKQD).

It belongs to the small GTPase superfamily. Arf family.

Its function is as follows. May be involved in trafficking events within the endosomal system. The protein is ADP-ribosylation factor L (arrL) of Dictyostelium discoideum (Social amoeba).